The primary structure comprises 307 residues: Ornithine carbamoyltransferase (307 aa).

Carbamoyl phosphate contacts are provided by residues 50-53 (STRT), Gln77, Arg101, and 128-131 (HPCQ). L-ornithine is bound by residues Asn160, Asp224, and 228–229 (SM). Residues 264 to 265 (CL) and Arg292 contribute to the carbamoyl phosphate site.

The protein belongs to the aspartate/ornithine carbamoyltransferase superfamily. OTCase family.

It localises to the cytoplasm. It carries out the reaction carbamoyl phosphate + L-ornithine = L-citrulline + phosphate + H(+). The protein operates within amino-acid biosynthesis; L-arginine biosynthesis; L-arginine from L-ornithine and carbamoyl phosphate: step 1/3. Inhibited by arginine, norvaline. Functionally, reversibly catalyzes the transfer of the carbamoyl group from carbamoyl phosphate (CP) to the N(epsilon) atom of ornithine (ORN) to produce L-citrulline, which is a substrate for argininosuccinate synthetase, the enzyme involved in the final step in arginine biosynthesis. This chain is Ornithine carbamoyltransferase, found in Mycolicibacterium smegmatis (strain ATCC 700084 / mc(2)155) (Mycobacterium smegmatis).